The following is a 136-amino-acid chain: Protein PsiE (136 aa).

Helical transmembrane passes span 15–35, 55–75, 83–103, and 108–128; these read ILQN…VVFL, YELV…ALIV, HFPL…LIIV, and PMDV…LWLC.

This sequence belongs to the PsiE family.

Its subcellular location is the cell inner membrane. This Salmonella agona (strain SL483) protein is Protein PsiE.